Reading from the N-terminus, the 515-residue chain is tRNA pseudouridine synthase Pus10 (515 aa).

The Zn(2+) site is built by C21 and C24. Residues 42 to 85 are a coiled coil; it reads KEVTYELQKYLSHGDPAEENDTPPSKKAKIEEDTSSNEHLGNCE. The interval 55–82 is disordered; sequence GDPAEENDTPPSKKAKIEEDTSSNEHLG. 2 residues coordinate Zn(2+): C96 and C99. An RNA binding forefinger loop region spans residues 291–304; sequence TPWIIDGERKIESS. D331 acts as the Nucleophile in catalysis. Residues 428–443 form an RNA binding thumb loop region; it reads QKTPLRVLHRRPLASR.

Belongs to the pseudouridine synthase Pus10 family.

It is found in the nucleus. Its subcellular location is the cytoplasm. The protein resides in the mitochondrion. The catalysed reaction is uridine(55) in tRNA = pseudouridine(55) in tRNA. It carries out the reaction uridine(54) in tRNA = pseudouridine(54) in tRNA. Its function is as follows. Protein with different functions depending on its subcellular location: involved in miRNA processing in the nucleus and acts as a tRNA pseudouridylate synthase in the cytoplasm. In the cytoplasm, acts as a pseudouridylate synthase by catalyzing synthesis of pseudouridine(54) and pseudouridine(55) from uracil-54 and uracil-55, respectively, in the psi GC loop of a subset of tRNAs. tRNA pseudouridylate synthase activity is enhanced by the presence of 1-methyladenosine at position 53-61 of tRNAs. Does not show tRNA pseudouridylate synthase activity in the nucleus. In the nucleus, promotes primary microRNAs (pri-miRNAs) processing independently of its RNA pseudouridylate synthase activity. Binds pri-miRNAs. The protein is tRNA pseudouridine synthase Pus10 of Xenopus laevis (African clawed frog).